We begin with the raw amino-acid sequence, 201 residues long: Dephospho-CoA kinase (201 aa).

Positions 4–201 (TIGLTGGIAS…ILKQWDALEK (198 aa)) constitute a DPCK domain. 12-17 (ASGKST) lines the ATP pocket.

The protein belongs to the CoaE family.

The protein resides in the cytoplasm. It carries out the reaction 3'-dephospho-CoA + ATP = ADP + CoA + H(+). Its pathway is cofactor biosynthesis; coenzyme A biosynthesis; CoA from (R)-pantothenate: step 5/5. Functionally, catalyzes the phosphorylation of the 3'-hydroxyl group of dephosphocoenzyme A to form coenzyme A. This chain is Dephospho-CoA kinase, found in Geobacillus kaustophilus (strain HTA426).